We begin with the raw amino-acid sequence, 155 residues long: Protein LOL2 (155 aa).

Residue Met-1 is modified to N-acetylmethionine. The segment at 1–35 (MEEIQQQTQKEEQKHREEEEEEEEGPPPGWESAVL) is disordered. 2 putative zinc finger regions span residues 60–90 (QMVC…VNLV) and 98–128 (QVNC…VTDI). Residues 130–155 (ENNKRPPWSEQQGPLKSLSSLRRAEN) form a disordered region. Residues 138–149 (SEQQGPLKSLSS) show a composition bias toward polar residues.

It localises to the nucleus. Putative zinc finger that may be involved in programmed cell death and defense response. This is Protein LOL2 (LOL2) from Arabidopsis thaliana (Mouse-ear cress).